The chain runs to 127 residues: Fluoride-specific ion channel FluC (127 aa).

The next 4 membrane-spanning stretches (helical) occupy residues 3-23 (LVFLWAALGGALGSSLRYFVG), 38-58 (LGTFSVNLIGCFVIGLMGHLA), 67-87 (FGIFFVTGVLGGFTTFSSYGL), and 102-122 (ISYVLGTNILGLIGVAIGWFL). Na(+) contacts are provided by Gly-77 and Thr-80.

The protein belongs to the fluoride channel Fluc/FEX (TC 1.A.43) family.

Its subcellular location is the cell inner membrane. The enzyme catalyses fluoride(in) = fluoride(out). Its activity is regulated as follows. Na(+) is not transported, but it plays an essential structural role and its presence is essential for fluoride channel function. Its function is as follows. Fluoride-specific ion channel. Important for reducing fluoride concentration in the cell, thus reducing its toxicity. The chain is Fluoride-specific ion channel FluC from Helicobacter acinonychis (strain Sheeba).